Here is a 384-residue protein sequence, read N- to C-terminus: Cyclohexane-1-carbonyl-CoA dehydrogenase (384 aa).

Belongs to the acyl-CoA dehydrogenase family. As to quaternary structure, homotetramer. It depends on FAD as a cofactor.

The catalysed reaction is cyclohexane-1-carbonyl-CoA + oxidized [electron-transfer flavoprotein] + H(+) = cyclohex-1-ene-1-carbonyl-CoA + reduced [electron-transfer flavoprotein]. Mediates the conversion of cyclohexane-1-carbonyl-CoA (ChCoA) into cyclohex-1-ene-1-carbonyl-CoA in biosynthesis of cyclohexane-1-carboxylate, a by-product produced during fermentation of benzoate and crotonate to acetate. The chain is Cyclohexane-1-carbonyl-CoA dehydrogenase from Syntrophus aciditrophicus (strain SB).